The following is a 203-amino-acid chain: MGSVNGPLRVGIGGPVGAGKTTLTAELARAMGQAYSVAVITNDIYTSEDAEFLLRAQVLPAERIRGVETGGCPHTAIREDASINLAAIAEFRTRLPDLDVIFIESGGDNLAATFSPELADLTIYVIDTAAGQDIPRKKGPGLTRSDLLIVNKVDLAPHVGVDVAQLEADTRAARGRRAYVMGSLREGRGVPEIVQFIKEVGGL.

14–21 (GPVGAGKT) serves as a coordination point for GTP.

Belongs to the SIMIBI class G3E GTPase family. UreG subfamily. As to quaternary structure, homodimer. UreD, UreF and UreG form a complex that acts as a GTP-hydrolysis-dependent molecular chaperone, activating the urease apoprotein by helping to assemble the nickel containing metallocenter of UreC. The UreE protein probably delivers the nickel.

The protein localises to the cytoplasm. Functionally, facilitates the functional incorporation of the urease nickel metallocenter. This process requires GTP hydrolysis, probably effectuated by UreG. In Jannaschia sp. (strain CCS1), this protein is Urease accessory protein UreG.